We begin with the raw amino-acid sequence, 155 residues long: Protein-export protein SecB (155 aa).

It belongs to the SecB family. Homotetramer, a dimer of dimers. One homotetramer interacts with 1 SecA dimer.

Its subcellular location is the cytoplasm. Its function is as follows. One of the proteins required for the normal export of preproteins out of the cell cytoplasm. It is a molecular chaperone that binds to a subset of precursor proteins, maintaining them in a translocation-competent state. It also specifically binds to its receptor SecA. In Psychromonas ingrahamii (strain DSM 17664 / CCUG 51855 / 37), this protein is Protein-export protein SecB.